A 211-amino-acid polypeptide reads, in one-letter code: GTP-binding protein ypt5 (211 aa).

Position 21-28 (Gly-21–Ser-28) interacts with GTP. An Effector region motif is present at residues Arg-43–Phe-51. GTP-binding positions include Asp-70 to Gln-74 and Asn-128 to Asp-131. S-geranylgeranyl cysteine attachment occurs at residues Cys-209 and Cys-211. Cys-211 carries the post-translational modification Cysteine methyl ester.

This sequence belongs to the small GTPase superfamily. Rab family.

It localises to the cell membrane. In terms of biological role, protein transport. Probably involved in vesicular traffic. This is GTP-binding protein ypt5 (ypt5) from Schizosaccharomyces pombe (strain 972 / ATCC 24843) (Fission yeast).